A 776-amino-acid polypeptide reads, in one-letter code: Microtubule-associated protein tau (776 aa).

Basic and acidic residues predominate over residues 1 to 26 (MAEPRQEFEVMEDHAGTYGLGDRKDQ). 2 disordered regions span residues 1 to 263 (MAEP…PAKG) and 276 to 591 (STEI…LKNV). N-acetylalanine is present on alanine 2. Phosphotyrosine occurs at positions 18 and 29. Lysine 44 participates in a covalent cross-link: Glycyl lysine isopeptide (Lys-Gly) (interchain with G-Cter in ubiquitin). A phosphoserine mark is found at serine 46 and serine 61. Residues 61–71 (SETSDAKSTPT) show a composition bias toward polar residues. Threonine 69, threonine 71, and threonine 111 each carry phosphothreonine. 2 stretches are compositionally biased toward basic and acidic residues: residues 179-189 (EGGRHAPELLK) and 207-216 (GGKERPGSKE). The residue at position 214 (serine 214) is a Phosphoserine. Acidic residues predominate over residues 217–228 (EVDEDRDVDESS). The segment covering 314–323 (EQAHSEEHLG) has biased composition (basic and acidic residues). The segment covering 324–340 (RAAFPGAPGEGPEARGP) has biased composition (low complexity). Basic and acidic residues-rich tracts occupy residues 344-356 (EDTK…ESSE) and 381-393 (KSKD…DKKA). Residues 440 to 452 (KYVSSVTPRTGSS) show a composition bias toward polar residues. Residues 455-466 (KEMKLKGADGKT) are compositionally biased toward basic and acidic residues. Phosphothreonine is present on threonine 470. At arginine 472 the chain carries Omega-N-methylarginine. The residue at position 480 (lysine 480) is an N6,N6-dimethyllysine; alternate. An N6-acetyllysine; alternate modification is found at lysine 480. Phosphothreonine is present on residues threonine 486, threonine 492, and threonine 498. Serine 502, serine 526, and serine 530 each carry phosphoserine. Basic and acidic residues predominate over residues 517 to 528 (RSERGEPPKSGD). Positions 529–549 (RSGYSSPGSPGTPGSRSRTPS) are enriched in low complexity. At tyrosine 532 the chain carries Phosphotyrosine. A phosphoserine mark is found at serine 533, serine 534, and serine 537. Phosphothreonine occurs at positions 540 and 547. Serine 549 is subject to Phosphoserine. Residue threonine 552 is modified to Phosphothreonine. An N6-acetyllysine modification is found at lysine 560. Threonine 566 carries the post-translational modification Phosphothreonine. Residues serine 570 and serine 572 each carry the phosphoserine modification. Tau/MAP repeat units lie at residues 579 to 609 (QTAP…GGGK), 610 to 640 (VQII…GGGS), 641 to 671 (VQIV…GGGQ), and 672 to 703 (VEVK…GGGN). Lysine 589 participates in a covalent cross-link: Glycyl lysine isopeptide (Lys-Gly) (interchain with G-Cter in ubiquitin). At lysine 594 the chain carries N6-acetyllysine; alternate. Lysine 594 bears the N6-methyllysine; alternate mark. A Glycyl lysine isopeptide (Lys-Gly) (interchain with G-Cter in ubiquitin); alternate cross-link involves residue lysine 594. Phosphoserine is present on serine 597. A Glycyl lysine isopeptide (Lys-Gly) (interchain with G-Cter in ubiquitin) cross-link involves residue lysine 602. Lysine 616 carries the N6-acetyllysine; alternate modification. Lysine 616 is covalently cross-linked (Glycyl lysine isopeptide (Lys-Gly) (interchain with G-Cter in ubiquitin); alternate). A phosphoserine mark is found at serine 620 and serine 624. Lysine 625 is subject to N6-acetyllysine. The residue at position 628 (serine 628) is a Phosphoserine. The residue at position 633 (lysine 633) is an N6-acetyllysine; alternate. Lysine 633 is covalently cross-linked (Glycyl lysine isopeptide (Lys-Gly) (interchain with G-Cter in ubiquitin); alternate). Serine 640 is subject to Phosphoserine. N6,N6-dimethyllysine; alternate is present on lysine 646. Residues lysine 646, lysine 652, and lysine 656 each carry the N6-acetyllysine; alternate modification. Glycyl lysine isopeptide (Lys-Gly) (interchain with G-Cter in ubiquitin); alternate cross-links involve residues lysine 646, lysine 652, and lysine 656. Phosphoserine is present on serine 659. An N6-acetyllysine; alternate mark is found at lysine 666, lysine 678, and lysine 682. Glycyl lysine isopeptide (Lys-Gly) (interchain with G-Cter in ubiquitin); alternate cross-links involve residues lysine 666, lysine 678, and lysine 682. Arginine 684 bears the Omega-N-methylarginine mark. Serine 687 bears the Phosphoserine mark. Residue lysine 688 forms a Glycyl lysine isopeptide (Lys-Gly) (interchain with G-Cter in ubiquitin) linkage. Serine 691 is subject to Phosphoserine. Lysine 704 carries the N6-acetyllysine; alternate modification. A Glycyl lysine isopeptide (Lys-Gly) (interchain with G-Cter in ubiquitin); alternate cross-link involves residue lysine 704. A Glycyl lysine isopeptide (Lys-Gly) (interchain with G-Cter in ubiquitin) cross-link involves residue lysine 710. The residue at position 720 (lysine 720) is an N6-acetyllysine; alternate. Lysine 720 is covalently cross-linked (Glycyl lysine isopeptide (Lys-Gly) (interchain with G-Cter in ubiquitin); alternate). Phosphotyrosine is present on tyrosine 729. Serine 731 and serine 735 each carry phosphoserine. Residues 733–752 (VVSGDTSPRHLSNVSSTGSI) form a disordered region. A compositionally biased stretch (polar residues) spans 736 to 751 (GDTSPRHLSNVSSTGS). Residue threonine 738 is modified to Phosphothreonine. Phosphoserine is present on residues serine 739, serine 744, serine 751, and serine 757. The residue at position 762 (threonine 762) is a Phosphothreonine.

Interacts with MARK1, MARK2, MARK3 and MARK4. Interacts with SQSTM1 when polyubiquitinated. Interacts with PSMC2 through SQSTM1. Interacts with FKBP4. Binds to CSNK1D. Interacts with SGK1. Interacts with EPM2A; the interaction dephosphorylates MAPT at Ser-396. Interacts with PIN1. Interacts with LRRK2. Interacts with LRP1, leading to endocytosis; this interaction is reduced in the presence of LRPAP1/RAP. Polyubiquitinated. Requires functional TRAF6 and may provoke SQSTM1-dependent degradation by the proteasome. Post-translationally, phosphorylation at various serine and threonine residues in S-P or T-P motifs by proline-directed protein kinases (PDPK1, CDK1, CDK5, GSK3, MAPK) (a few sites per protein in interphase, more in mitosis), and at serine residues in K-X-G-S motifs by MAP/microtubule affinity-regulating kinase (MARK1, MARK2, MARK3 or MARK4), causing detachment from microtubules, and their disassembly. Phosphorylation at Ser-597 by BRSK1 and BRSK2 in neurons affects ability to bind microtubules and plays a role in neuron polarization. Phosphorylation at Ser-214 by SGK1 mediates microtubule depolymerization and neurite formation in hippocampal neurons. Phosphorylated by PHK. Dephosphorylation at several serine and threonine residues by the serine/threonine phosphatase PPP5C.

The protein localises to the cytoplasm. It localises to the cytosol. It is found in the cell membrane. Its subcellular location is the cytoskeleton. The protein resides in the cell projection. The protein localises to the axon. It localises to the dendrite. Its function is as follows. Promotes microtubule assembly and stability, and might be involved in the establishment and maintenance of neuronal polarity. The C-terminus binds axonal microtubules while the N-terminus binds neural plasma membrane components, suggesting that tau functions as a linker protein between both. Axonal polarity is predetermined by tau localization (in the neuronal cell) in the domain of the cell body defined by the centrosome. The short isoforms allow plasticity of the cytoskeleton whereas the longer isoforms may preferentially play a role in its stabilization. This is Microtubule-associated protein tau (MAPT) from Gorilla gorilla gorilla (Western lowland gorilla).